Consider the following 612-residue polypeptide: Dihydroxy-acid dehydratase (612 aa).

D81 is a Mg(2+) binding site. C122 serves as a coordination point for [2Fe-2S] cluster. The Mg(2+) site is built by D123 and K124. K124 is modified (N6-carboxylysine). C195 lines the [2Fe-2S] cluster pocket. A Mg(2+)-binding site is contributed by E491. S517 acts as the Proton acceptor in catalysis.

It belongs to the IlvD/Edd family. In terms of assembly, homodimer. [2Fe-2S] cluster is required as a cofactor. The cofactor is Mg(2+).

It carries out the reaction (2R)-2,3-dihydroxy-3-methylbutanoate = 3-methyl-2-oxobutanoate + H2O. The catalysed reaction is (2R,3R)-2,3-dihydroxy-3-methylpentanoate = (S)-3-methyl-2-oxopentanoate + H2O. It participates in amino-acid biosynthesis; L-isoleucine biosynthesis; L-isoleucine from 2-oxobutanoate: step 3/4. Its pathway is amino-acid biosynthesis; L-valine biosynthesis; L-valine from pyruvate: step 3/4. Functions in the biosynthesis of branched-chain amino acids. Catalyzes the dehydration of (2R,3R)-2,3-dihydroxy-3-methylpentanoate (2,3-dihydroxy-3-methylvalerate) into 2-oxo-3-methylpentanoate (2-oxo-3-methylvalerate) and of (2R)-2,3-dihydroxy-3-methylbutanoate (2,3-dihydroxyisovalerate) into 2-oxo-3-methylbutanoate (2-oxoisovalerate), the penultimate precursor to L-isoleucine and L-valine, respectively. The sequence is that of Dihydroxy-acid dehydratase from Rhizobium etli (strain CIAT 652).